The primary structure comprises 1235 residues: Receptor-type adenylate cyclase ESAG 4 (1235 aa).

Positions 1 to 20 (MNMLHLSDRNASLAPSGGEH) are disordered. At 1-32 (MNMLHLSDRNASLAPSGGEHSLPTGGAVCRDA) the chain is on the cytoplasmic side. Residues 33–53 (MDILPVILRAPVALLLLLVVL) form a helical membrane-spanning segment. The Extracellular segment spans residues 54–858 (PQLSVGAEAN…SNAGRISGAS (805 aa)). Residues N63, N90, N97, N362, N531, N566, N705, and N830 are each glycosylated (N-linked (GlcNAc...) asparagine). A helical transmembrane segment spans residues 859-879 (LVGIIIGGALALFLVVALGVV). Residues 880-1235 (PYFFLRNTVI…VSSQVEERLL (356 aa)) lie on the Cytoplasmic side of the membrane. A Guanylate cyclase domain is found at 900–1054 (TLIFTDIESS…RTSNMAARTE (155 aa)). 2 residues coordinate Mg(2+): D905 and D948.

It belongs to the adenylyl cyclase class-3 family. Mg(2+) serves as cofactor.

Its subcellular location is the membrane. The enzyme catalyses ATP = 3',5'-cyclic AMP + diphosphate. Its function is as follows. Could act as a receptor for an unknown ligand. The chain is Receptor-type adenylate cyclase ESAG 4 (ESAG4) from Trypanosoma brucei brucei.